A 112-amino-acid polypeptide reads, in one-letter code: Na(+)/H(+) antiporter subunit C (112 aa).

A run of 3 helical transmembrane segments spans residues 4 to 21, 28 to 50, and 70 to 92; these read LMSI…YLIL, VVVG…AGLQ, and QALI…VLAY.

This sequence belongs to the CPA3 antiporters (TC 2.A.63) subunit C family. As to quaternary structure, forms a heterooligomeric complex that consists of seven subunits: MrpA, MrpB, MrpC, MrpD, MrpE, MrpF and MrpG.

Its subcellular location is the cell membrane. Mnh complex is a Na(+)Li(+)/H(+) antiporter involved in Na(+) and/or Li(+) excretion and Na(+) resistance. Na(+)/H(+) antiport consumes a transmembrane electrical potential, and is thus inferred to be electrogenic. Does not transport K(+), Ca(2+) or Mg(2+). The protein is Na(+)/H(+) antiporter subunit C (mrpC) of Alkalihalophilus pseudofirmus (strain ATCC BAA-2126 / JCM 17055 / OF4) (Bacillus pseudofirmus).